Consider the following 352-residue polypeptide: Ion-translocating oxidoreductase complex subunit D (352 aa).

5 consecutive transmembrane segments (helical) span residues 20–40 (IMLL…WFFG), 42–62 (GTLV…ALVL), 78–109 (ALLT…VIIA), 123–143 (PAMI…TSWL), and 148–168 (IAVN…GHTA). Thr-187 carries the post-translational modification FMN phosphoryl threonine. 5 consecutive transmembrane segments (helical) span residues 214–234 (ILAG…GVWL), 242–262 (WHIP…GWLF), 267–287 (LAAP…FFIL), 301–321 (LIFG…GGYP), and 322–342 (DGVA…DYYT).

Belongs to the NqrB/RnfD family. The complex is composed of six subunits: RsxA, RsxB, RsxC, RsxD, RsxE and RsxG. It depends on FMN as a cofactor.

Its subcellular location is the cell inner membrane. Part of a membrane-bound complex that couples electron transfer with translocation of ions across the membrane. Required to maintain the reduced state of SoxR. Probably transfers electron from NAD(P)H to SoxR. The protein is Ion-translocating oxidoreductase complex subunit D of Escherichia coli (strain K12).